Consider the following 211-residue polypeptide: MRKLSFLDRVIEELDSYARFTKVPLNPSKKSPSSDTIDGKLFEIEKKHSAGLMRVDYTGEICAQGLYRGQASVAKSPQTKEHLYHAAAEEYDHLAWCGERLQELGARPSLLNPFWYWTSFGIGAVAGSISDSLSYGFVVETEKQVMKHIDSHLKSLPVNDNRSREILKQMYIDESEHAVEAEKAGGKKLPKTVKAIMKLQSKVMTTLAYRF.

6 residues coordinate Fe cation: Glu-60, Glu-90, His-93, Glu-142, Glu-174, and His-177.

It belongs to the COQ7 family. The cofactor is Fe cation.

It localises to the cell membrane. It catalyses the reaction a 5-methoxy-2-methyl-3-(all-trans-polyprenyl)benzene-1,4-diol + AH2 + O2 = a 3-demethylubiquinol + A + H2O. The protein operates within cofactor biosynthesis; ubiquinone biosynthesis. In terms of biological role, catalyzes the hydroxylation of 2-nonaprenyl-3-methyl-6-methoxy-1,4-benzoquinol during ubiquinone biosynthesis. In Francisella tularensis subsp. holarctica (strain FTNF002-00 / FTA), this protein is 3-demethoxyubiquinol 3-hydroxylase.